A 669-amino-acid polypeptide reads, in one-letter code: Hypoxia-inducible factor 3-alpha (669 aa).

The interval 1–27 (MALGLQRARSTTELRKEKSRDAARSRR) is disordered. Residues 10 to 27 (STTELRKEKSRDAARSRR) show a composition bias toward basic and acidic residues. The bHLH domain occupies 14–67 (LRKEKSRDAARSRRSQETEVLYQLAHTLPFARGVSAHLDKASIMRLTISYLRMH). Residues 77–100 (QVGAGGEPLDACYLKALEGFVMVL) form a nuclear localization signal region. 2 PAS domains span residues 82–154 (GEPL…LSRR) and 227–297 (PHPG…LSKG). Residues 230–274 (GSLEPPLGRGAFLSRHSLDMKFTYCDDRIAEVAGYSPDDLIGCSA) form a nuclear export signal region. A disordered region spans residues 354-389 (EQTEQHSRRPIQRGAPSQKDTPNPGDSLDTPGPRIL). The LRRLL signature appears at 414-418 (LRRLL). Residues 430 to 444 (TPSTPLATRHPQSPL) are compositionally biased toward polar residues. Residues 430–451 (TPSTPLATRHPQSPLSADLPDE) form a disordered region. The segment at 452–581 (LPVGTENVHR…TLAQSSEDED (130 aa)) is ODD. An NTAD region spans residues 454 to 506 (VGTENVHRLFTSGKDTEAVETDLDIAQDADALDLEMLAPYISMDDDFQLNASE). Lys-467 participates in a covalent cross-link: Glycyl lysine isopeptide (Lys-Gly) (interchain with G-Cter in ubiquitin). Positions 490 to 497 (LAPYISMD) match the LAPYISMD motif. The residue at position 492 (Pro-492) is a 4-hydroxyproline. Disordered stretches follow at residues 523-600 (RARS…SPEH) and 619-669 (APGS…AQAD). Low complexity-rich tracts occupy residues 530–541 (LSPPALEPSLLP) and 550–564 (SCSSPSRGDPSASSP). Residue Lys-570 forms a Glycyl lysine isopeptide (Lys-Gly) (interchain with G-Cter in ubiquitin) linkage. Residues 629-646 (PLLNLNEPLGLGPSLLSP) show a composition bias toward low complexity.

As to quaternary structure, isoform 2 interacts (via ODD domain) with VHL (via beta domain). Isoform 4 interacts with HIF1A; the interaction inhibits the binding of HIF1A to hypoxia-responsive element (HRE) and HIF1A/ARNT-dependent transcriptional activation. Isoform 4 interacts with ARNT; the interaction occurs in a HIF1A- and DNA-binding-independent manner and does not induce HIF1A/ARNT-dependent transcriptional activation. Isoform 4 interacts with EPAS1. Interacts with BAD, BCL2L2 and MCL1. In terms of processing, in normoxia, hydroxylated on Pro-492 in the oxygen-dependent degradation domain (ODD) by prolyl hydroxylase(s) (PHD). The hydroxylated proline promotes interaction with VHL, initiating rapid ubiquitination and subsequent proteasomal degradation. Ubiquitinated; ubiquitination occurs in a VHL- and oxygen-dependent pathway and subsequently targeted for proteasomal degradation. As to expression, expressed in vascular cells (at protein level). Expressed in kidney. Expressed in lung epithelial cells. Expressed in endothelial cells (venous and arterial cells from umbilical cord and aortic endothelial cells) and in vascular smooth muscle cells (aorta). Strongly expressed in the heart, placenta, and skeletal muscle, whereas a weak expression profile was found in the lung, liver, and kidney. Expressed weakly in cell renal cell carcinoma (CC-RCC) compared to normal renal cells. Expression is down-regulated in numerous kidney tumor cells compared to non tumor kidney tissues. Isoform 2 is expressed in heart, placenta, lung, liver, skeletal muscle and pancreas and in numerous cancer cell lines. Isoform 3 and isoform 4 are weakly expressed in heart, placenta, lung, liver, skeletal muscle and pancreas. Isoform 4 is expressed in fetal tissues, such as heart, brain, thymus, lung, liver, skeletal kidney and spleen. Isoform 3 is weakly expressed in fetal tissues, such as liver and kidney.

The protein resides in the nucleus. It is found in the cytoplasm. The protein localises to the nucleus speckle. Its subcellular location is the mitochondrion. Its function is as follows. Acts as a transcriptional regulator in adaptive response to low oxygen tension. Acts as a regulator of hypoxia-inducible gene expression. Functions as an inhibitor of angiogenesis in hypoxic cells of the cornea. Plays a role in the development of the cardiorespiratory system. May also be involved in apoptosis. Attenuates the ability of transcription factor HIF1A to bind to hypoxia-responsive elements (HRE) located within the enhancer/promoter of hypoxia-inducible target genes and hence inhibits HRE-driven transcriptional activation. Also inhibits hypoxia-inducible ARNT-mediated gene expression. In terms of biological role, attenuates the ability of transcription factor HIF1A to bind to hypoxia-responsive elements (HRE) located within the enhancer/promoter of hypoxia-inducible target genes and hence inhibits HRE-driven transcriptional activation. Functionally, attenuates the ability of transcription factor HIF1A and EPAS1/HIF2A to bind to hypoxia-responsive elements (HRE) located within the enhancer/promoter of hypoxia-inducible target genes and hence inhibits HRE-driven transcriptional activation. May act as a tumor suppressor and inhibits malignant cell transformation. The protein is Hypoxia-inducible factor 3-alpha of Homo sapiens (Human).